A 184-amino-acid polypeptide reads, in one-letter code: Ribosome-recycling factor (184 aa).

Belongs to the RRF family.

Its subcellular location is the cytoplasm. Responsible for the release of ribosomes from messenger RNA at the termination of protein biosynthesis. May increase the efficiency of translation by recycling ribosomes from one round of translation to another. In Agathobacter rectalis (strain ATCC 33656 / DSM 3377 / JCM 17463 / KCTC 5835 / VPI 0990) (Eubacterium rectale), this protein is Ribosome-recycling factor.